Reading from the N-terminus, the 179-residue chain is Adenine phosphoribosyltransferase (179 aa).

It belongs to the purine/pyrimidine phosphoribosyltransferase family. As to quaternary structure, homodimer.

It is found in the cytoplasm. The catalysed reaction is AMP + diphosphate = 5-phospho-alpha-D-ribose 1-diphosphate + adenine. It functions in the pathway purine metabolism; AMP biosynthesis via salvage pathway; AMP from adenine: step 1/1. Catalyzes a salvage reaction resulting in the formation of AMP, that is energically less costly than de novo synthesis. The chain is Adenine phosphoribosyltransferase from Methylacidiphilum infernorum (isolate V4) (Methylokorus infernorum (strain V4)).